A 54-amino-acid polypeptide reads, in one-letter code: UPF0391 membrane protein Tbd_2238 (54 aa).

2 helical membrane-spanning segments follow: residues 5–25 (ALVFFIIAIVAAVFGFSGIAA) and 28–48 (VGIAKILFVVFLIMAIATFVV).

It belongs to the UPF0391 family.

The protein resides in the cell membrane. The chain is UPF0391 membrane protein Tbd_2238 from Thiobacillus denitrificans (strain ATCC 25259 / T1).